The following is a 110-amino-acid chain: Flagellar hook-basal body complex protein FliE (110 aa).

The protein belongs to the FliE family.

The protein resides in the bacterial flagellum basal body. This chain is Flagellar hook-basal body complex protein FliE, found in Pseudomonas putida (strain GB-1).